The sequence spans 217 residues: Small ribosomal subunit protein uS3c (217 aa).

A KH type-2 domain is found at 43-117; that stretch reads IKNYVQKNRK…KLNIAITRIA (75 aa).

This sequence belongs to the universal ribosomal protein uS3 family. Part of the 30S ribosomal subunit.

It is found in the plastid. It localises to the chloroplast. This chain is Small ribosomal subunit protein uS3c (rps3), found in Ranunculus macranthus (Large buttercup).